The primary structure comprises 176 residues: MKRSKWRTRFAGAYCDPILRSWLTEPDSLTARCQRASSAFRVRLLRYGKGQALADEAVEGKAGRHSAWVREVVLECDGVPVIFAHTTLSTARRGRMTRWMAGLGSRSLGSLLFAYPGFKRGGIEFLRLDRCHPLYRRAAALGAGRKSLWARRSLHRLGGQQVLVTEVFLPAITLLK.

Substrate contacts are provided by Arg70, Leu108, and Glu166.

Belongs to the UbiC family.

The protein localises to the cytoplasm. It catalyses the reaction chorismate = 4-hydroxybenzoate + pyruvate. Its pathway is cofactor biosynthesis; ubiquinone biosynthesis. Removes the pyruvyl group from chorismate, with concomitant aromatization of the ring, to provide 4-hydroxybenzoate (4HB) for the ubiquinone pathway. The sequence is that of Probable chorismate pyruvate-lyase from Dechloromonas aromatica (strain RCB).